A 615-amino-acid chain; its full sequence is Glutamine--fructose-6-phosphate aminotransferase [isomerizing] (615 aa).

The active-site Nucleophile; for GATase activity is cysteine 2. The Glutamine amidotransferase type-2 domain occupies 2-220 (CGIVGYVGPQ…QDQVVELRRD (219 aa)). SIS domains are found at residues 287–427 (IPPG…VRGT) and 460–605 (LARS…VDQP). The active-site For Fru-6P isomerization activity is the lysine 610.

Homodimer.

Its subcellular location is the cytoplasm. The enzyme catalyses D-fructose 6-phosphate + L-glutamine = D-glucosamine 6-phosphate + L-glutamate. Catalyzes the first step in hexosamine metabolism, converting fructose-6P into glucosamine-6P using glutamine as a nitrogen source. In Streptomyces coelicolor (strain ATCC BAA-471 / A3(2) / M145), this protein is Glutamine--fructose-6-phosphate aminotransferase [isomerizing].